Reading from the N-terminus, the 106-residue chain is Gas vesicle protein J (106 aa).

Belongs to the gas vesicle GvpA family.

The protein resides in the gas vesicle. A minor component of the gas vesicle, might be involved in nucleating gas vesicle formation. Gas vesicles are hollow, gas filled proteinaceous nanostructures found in some microorganisms. It is not clear what function gas vesicles perform in soil bacteria. The protein is Gas vesicle protein J of Streptomyces sp. (strain CB03234).